Consider the following 843-residue polypeptide: Protein translocase subunit SecA 1 (843 aa).

ATP-binding positions include glutamine 91, 109-113, and aspartate 498; that span reads GEGKT. The segment covering 799–813 has biased composition (basic and acidic residues); it reads EAKHVSAEDGKEKVK. Residues 799 to 826 form a disordered region; the sequence is EAKHVSAEDGKEKVKPKPIVKGDQVGRN. Zn(2+) is bound by residues cysteine 829, cysteine 831, cysteine 840, and histidine 841.

It belongs to the SecA family. Monomer and homodimer. Part of the essential Sec protein translocation apparatus which comprises SecA, SecYEG and auxiliary proteins SecDF. Other proteins may also be involved. Requires Zn(2+) as cofactor.

The protein localises to the cell membrane. It localises to the cytoplasm. The enzyme catalyses ATP + H2O + cellular proteinSide 1 = ADP + phosphate + cellular proteinSide 2.. Its function is as follows. Part of the Sec protein translocase complex. Interacts with the SecYEG preprotein conducting channel. Has a central role in coupling the hydrolysis of ATP to the transfer of proteins into and across the cell membrane, serving as an ATP-driven molecular motor driving the stepwise translocation of polypeptide chains across the membrane. This is Protein translocase subunit SecA 1 from Staphylococcus aureus (strain N315).